Reading from the N-terminus, the 179-residue chain is Ribosome maturation factor RimM (179 aa).

The PRC barrel domain occupies 100–176; sequence KEEFHLLELI…FIIINPPNGL (77 aa).

Belongs to the RimM family. In terms of assembly, binds ribosomal protein uS19.

The protein resides in the cytoplasm. Functionally, an accessory protein needed during the final step in the assembly of 30S ribosomal subunit, possibly for assembly of the head region. Essential for efficient processing of 16S rRNA. May be needed both before and after RbfA during the maturation of 16S rRNA. It has affinity for free ribosomal 30S subunits but not for 70S ribosomes. The protein is Ribosome maturation factor RimM of Prochlorococcus marinus (strain MIT 9215).